A 313-amino-acid polypeptide reads, in one-letter code: MTSCHIAEEPIQKVAIFGGTHGNELTGVFLVKHWLENGAEIQRTGLEVKPFITNPRAVKKCTRYIDCDLNRIFDLENLGKKMSEDLPYEVRRAQEINHLFGPKDSEDSYDIIFDLHNTTSNMGCTLILEDSRNNFLIQMFHYIKTSLAPLPCYVYLIEHPSLKYATTRSIAKYPVGIEVGPQPQGVLRADILDQMRKMIKHALDFIHHFNEGKEFPPCAIEVYKIIEKVDYPRDENGEIAAVIHPNLQDQDWKPLHPGDPMFLTLDGKTIPLGGDCTVYPVFVNEAAYYEKKEAFAKTTKLTLNAKSIRCSLH.

Zn(2+) is bound by residues His21 and Glu24. 3 residues coordinate N-acetyl-L-aspartate: Arg63, Asn70, and Arg71. A Zn(2+)-binding site is contributed by His116. Positions 164 and 168 each coordinate N-acetyl-L-aspartate. The Proton donor/acceptor role is filled by Glu178. Tyr288 contacts N-acetyl-L-aspartate.

It belongs to the AspA/AstE family. Aspartoacylase subfamily. In terms of assembly, homodimer. Zn(2+) is required as a cofactor.

Its subcellular location is the cytoplasm. The protein resides in the nucleus. The catalysed reaction is an N-acyl-L-aspartate + H2O = a carboxylate + L-aspartate. It catalyses the reaction N-acetyl-L-aspartate + H2O = L-aspartate + acetate. In terms of biological role, catalyzes the deacetylation of N-acetylaspartic acid (NAA) to produce acetate and L-aspartate. NAA occurs in high concentration in brain and its hydrolysis NAA plays a significant part in the maintenance of intact white matter. In other tissues it acts as a scavenger of NAA from body fluids. This is Aspartoacylase from Pongo abelii (Sumatran orangutan).